A 1239-amino-acid chain; its full sequence is MASAMESDSGGGSGGADAQPPLAEVDGGLARVTRQLLLSGDDPAARLRALMPLELGIFGLGDLAQPVLVRDFLNTLTLMSGHAYPAAVLRHHAYYLLRAASFSRRSFGLGHLEAALDVLASSLPPTTASPATDDPLDGSRLIADTRALAAEYRRIIEEGSGEVLAVSGPTATFAFVEELVADTYLARWDAFPREGLSFYAFNAAKTTLGRWLVTVYAETNRYPWAAAGQGQPTAADIKAMAVELVEHSGGRAGGGEGEESGGGGLFHRPESLSSVVASLPLARRRAVEILGVYAEASGGQTPPVAAVPVLAFDAARLRLLEPSGALFYDYVYEALLWDQTYGVPDSVIEAFLAGMAAEMEALAARVQEAAGSRASFSPAAIEQVATVLLSAGLNETVAGDYAMMLASVPRVSRSRWRWLEATAALLESLSGFALHFFRLLPTASPTSRFARVARAAYLRAEAEAKDRRARRTSGPSTPAATAVGVGAVADPWDAVTPLRIFIVPPPAAEYEQVAGDLSSELLRSLLWVRYSRLWQAPAPAPALPCKPPLLPGEQGRRQWTAAVAAVPRTDVEAYCRSLRAGQTARADPAYVRSPFFPAAFIEFQIWPALRRVLSNELPKTRSLAALRWLVSFGSDLALPSPELTRARRPLELIYATVWEIYDGAPPMPGESPQAVGLRPLNLEGEGKAGDAGADGAEDEEGGGPWGLSSHDAVLRIMDAVREVSGIISETISASERAAEAPPLAWPTSLFSLLFTLRYSTTAESLGLATRRFLVSGETLSEDISRLTGAAWRLCSRPLLYDAETGRVQIPLATEEEEEAVVAVKEKSVSSSPRHYSTDLQTLKSVVEGIQDVCRDAAARWALATADTATLRRRLLVPALRESRGIADHPLWAHTSEPLRPDLEELNERVEHALELGYSLTGALRRSVAYRFRDYTFARLFQPPAIDAERAEAIVRRDARPPPVFTPAPRRLPQGGADTPPPLSMDDIMYLGKSICKALVDVLDHHPAAPETTPIKTYTPAMDLNPEQITVTPRSPSVLAAFARTARVQTHHLVPALTDDSPSPVGQTPPPFRILPAKKLAAILLGNGRNASKRRASRDLSPPPHGRWRAVLDSSPFSFSSSDFSDQDEGEGGKADLRGVPGGGGGGEGAYEEERERPSDIDTAARARKVETSCPRRRSPRTTPSPSRRASGGGGGPDRGEAEAHTCPPYLSAAAAASRVRPRTRRGATRRPPRPTAEDE.

4 disordered regions span residues methionine 1–proline 20, glycine 669–proline 704, arginine 959–proline 980, and glycine 1087–glutamate 1239. The interval asparagine 615–glutamate 1239 is interaction with large tegument protein. Residues aspartate 1112–phenylalanine 1123 show a composition bias toward low complexity. The segment covering valine 1139–glycine 1148 has biased composition (gly residues). A compositionally biased stretch (basic and acidic residues) spans glutamate 1151 to glutamate 1170. Over residues arginine 1180 to alanine 1189 the composition is skewed to low complexity. The segment covering valine 1219 to proline 1232 has biased composition (basic residues).

This sequence belongs to the herpesviridae inner tegument protein family. As to quaternary structure, interacts (via C-terminus) with the large tegument protein/LTP (via N-terminus).

The protein localises to the virion tegument. The protein resides in the host cytoplasm. Its subcellular location is the host nucleus. It localises to the host Golgi apparatus. It is found in the host trans-Golgi network. Plays an essential role in cytoplasmic secondary envelopment during viral egress. Interacts with the capsid via the large tegument protein/LTP and participates in its transport to the host trans-Golgi network (TGN) where secondary envelopment occurs. Modulates tegumentation and capsid accumulation at the viral assembly complex. The polypeptide is Inner tegument protein (Homo sapiens (Human)).